Here is a 442-residue protein sequence, read N- to C-terminus: tRNA-2-methylthio-N(6)-dimethylallyladenosine synthase (442 aa).

Residues 2 to 120 (KKVFIRTFGC…LPKMIVDKET (119 aa)) form the MTTase N-terminal domain. [4Fe-4S] cluster contacts are provided by Cys-11, Cys-49, Cys-83, Cys-157, Cys-161, and Cys-164. Positions 143–375 (RVEGGAAFVS…NEVIEAETAR (233 aa)) constitute a Radical SAM core domain. Residues 378-441 (QTMIGTVQRC…TFSLRGKVVE (64 aa)) form the TRAM domain.

Belongs to the methylthiotransferase family. MiaB subfamily. Monomer. It depends on [4Fe-4S] cluster as a cofactor.

The protein localises to the cytoplasm. The enzyme catalyses N(6)-dimethylallyladenosine(37) in tRNA + (sulfur carrier)-SH + AH2 + 2 S-adenosyl-L-methionine = 2-methylsulfanyl-N(6)-dimethylallyladenosine(37) in tRNA + (sulfur carrier)-H + 5'-deoxyadenosine + L-methionine + A + S-adenosyl-L-homocysteine + 2 H(+). Catalyzes the methylthiolation of N6-(dimethylallyl)adenosine (i(6)A), leading to the formation of 2-methylthio-N6-(dimethylallyl)adenosine (ms(2)i(6)A) at position 37 in tRNAs that read codons beginning with uridine. This chain is tRNA-2-methylthio-N(6)-dimethylallyladenosine synthase, found in Neisseria meningitidis serogroup C / serotype 2a (strain ATCC 700532 / DSM 15464 / FAM18).